Consider the following 124-residue polypeptide: Large ribosomal subunit protein uL29 (124 aa).

It belongs to the universal ribosomal protein uL29 family.

The protein is Large ribosomal subunit protein uL29 (RPL35) of Tetrahymena thermophila (strain SB210).